Here is a 374-residue protein sequence, read N- to C-terminus: Deoxyguanosinetriphosphate triphosphohydrolase-like protein (374 aa).

Residues 65 to 196 (RLTHSLEVAQ…ANLADEIAYN (132 aa)) enclose the HD domain.

The protein belongs to the dGTPase family. Type 2 subfamily.

The polypeptide is Deoxyguanosinetriphosphate triphosphohydrolase-like protein (dgt) (Nitrosomonas europaea (strain ATCC 19718 / CIP 103999 / KCTC 2705 / NBRC 14298)).